We begin with the raw amino-acid sequence, 473 residues long: Cucurbitadienol 11-hydroxylase (473 aa).

The helical transmembrane segment at 4 to 24 (VVLGLATLFVAYYIHWINKWR) threads the bilayer. Cys422 provides a ligand contact to heme.

The protein belongs to the cytochrome P450 family. The cofactor is heme. As to expression, highly expressed in young fruits 15 days after anthesis (15-DAA). Also observed in roots.

The protein resides in the membrane. The catalysed reaction is cucurbitadienol + 2 reduced [NADPH--hemoprotein reductase] + 2 O2 = 11-oxocucurbitadienol + 2 oxidized [NADPH--hemoprotein reductase] + 3 H2O + 2 H(+). The enzyme catalyses cucurbitadienol + reduced [NADPH--hemoprotein reductase] + O2 = 11-hydroxycucurbitadienol + oxidized [NADPH--hemoprotein reductase] + H2O + H(+). It carries out the reaction 11-hydroxycucurbitadienol + reduced [NADPH--hemoprotein reductase] + O2 = 11-oxocucurbitadienol + oxidized [NADPH--hemoprotein reductase] + 2 H2O + H(+). It catalyses the reaction (24R)-24,25-dihydroxycucurbitadienol + reduced [NADPH--hemoprotein reductase] + O2 = mogrol + oxidized [NADPH--hemoprotein reductase] + H2O + H(+). It participates in secondary metabolite biosynthesis; terpenoid biosynthesis. Hydroxylase involved in the biosynthesis of cucurbitacin and mogroside tetracyclic triterpene natural products (e.g. siamenoside I and mogrosides IV, V and VI). Cucurbitacins have cytotoxic properties and exhibit deterrent taste as a defense barrier against herbivores. Mogrosides are nonsugar highly oxygenated compounds used as high-intensity zero-calorie sweeteners; they also possess pharmacological properties such as regulating immunity, lowering blood sugar and lipid levels, protecting the liver, and acting as antioxidants and antitumor agents. Catalyzes the oxidation of cucurbitadienol at the C-11 position to produce 11-oxocucurbitadienol, a possible biosynthetic intermediate from cucurbitadienol to mogrol. Also mediates the conversion of 24,25-dihydroxycucurbitadienol to mogrol. The sequence is that of Cucurbitadienol 11-hydroxylase from Siraitia grosvenorii (Monk's fruit).